A 207-amino-acid chain; its full sequence is Alpha-1-acid glycoprotein 1 (207 aa).

Residues M1–A18 form the signal peptide. Q19 is modified (pyrrolidone carboxylic acid). Residues N25, N34, N76, N94, and N104 are each glycosylated (N-linked (GlcNAc...) asparagine). C91 and C184 form a disulfide bridge.

It belongs to the calycin superfamily. Lipocalin family.

Its subcellular location is the secreted. Its function is as follows. Functions as a transport protein in the blood stream. Binds various ligands in the interior of its beta-barrel domain. Appears to function in modulating the activity of the immune system during the acute-phase reaction. The protein is Alpha-1-acid glycoprotein 1 (Orm1) of Mus musculus (Mouse).